The sequence spans 117 residues: UPF0342 protein BcerKBAB4_0767 (117 aa).

This sequence belongs to the UPF0342 family.

This is UPF0342 protein BcerKBAB4_0767 from Bacillus mycoides (strain KBAB4) (Bacillus weihenstephanensis).